Reading from the N-terminus, the 317-residue chain is Melanocyte-stimulating hormone receptor (317 aa).

At 1 to 37 (MPVLGSQRRLLGSLNCTPPATLPLTLAPNRTGPQCLE) the chain is on the extracellular side. Asparagine 29 carries N-linked (GlcNAc...) asparagine glycosylation. Residues 38 to 63 (VSIPDGLFLSLGLVSLVENVLVVAAI) form a helical membrane-spanning segment. Residues 64 to 72 (AKNRNLHSP) are Cytoplasmic-facing. A helical membrane pass occupies residues 73 to 93 (MYYFICCLAMSDLLVSVSNVL). At 94–118 (ETAVMLLLEAGVLATRAAVVQQLDN) the chain is on the extracellular side. Residues 119 to 140 (VIDVLICSSMVSSLCFLGAIAV) form a helical membrane-spanning segment. Residues 141–163 (DRYISIFYALRYHSVVTLPRAWR) lie on the Cytoplasmic side of the membrane. A helical transmembrane segment spans residues 164–183 (IIAAIWVASILTSVLSITYY). Residues 184-191 (NHTVVLLC) are Extracellular-facing. A helical membrane pass occupies residues 192–211 (LVGFFIAMLALMAVLYVHML). Over 212 to 240 (ARACQHARGIARLQKRQRPIHQGFGLKGA) the chain is Cytoplasmic. The helical transmembrane segment at 241–266 (ATLTILLGVFFLCWGPFFLHLSLIVL) threads the bilayer. Topologically, residues 267-279 (CPQHPTCGCIFKN) are extracellular. Residues 280–300 (FNLFLALIICNAIVDPLIYAF) form a helical membrane-spanning segment. Topologically, residues 301 to 317 (RSQELRKTLQEVLQCSW) are cytoplasmic. Cysteine 315 is lipidated: S-palmitoyl cysteine.

Belongs to the G-protein coupled receptor 1 family. Interacts with MGRN1, but does not undergo MGRN1-mediated ubiquitination; this interaction competes with GNAS-binding and thus inhibits agonist-induced cAMP production. Interacts with OPN3; the interaction results in a decrease in MC1R-mediated cAMP signaling and ultimately a decrease in melanin production in melanocytes.

Its subcellular location is the cell membrane. Its function is as follows. Receptor for MSH (alpha, beta and gamma) and ACTH. The activity of this receptor is mediated by G proteins which activate adenylate cyclase. Mediates melanogenesis, the production of eumelanin (black/brown) and phaeomelanin (red/yellow), via regulation of cAMP signaling in melanocytes. This Ovis aries (Sheep) protein is Melanocyte-stimulating hormone receptor (MC1R).